We begin with the raw amino-acid sequence, 128 residues long: Large ribosomal subunit protein bL17 (128 aa).

It belongs to the bacterial ribosomal protein bL17 family. In terms of assembly, part of the 50S ribosomal subunit. Contacts protein L32.

This is Large ribosomal subunit protein bL17 from Tolumonas auensis (strain DSM 9187 / NBRC 110442 / TA 4).